The primary structure comprises 328 residues: Beta-agarase C (328 aa).

The first 17 residues, 1–17 (MNLTKMAVFAASLFCLA), serve as a signal peptide directing secretion. The propeptide occupies 18–67 (CKNDIDTELEKKSIPESEIQKSEEKLPNEEELTPTDPDEETNKEETVTAN). The segment covering 26 to 45 (LEKKSIPESEIQKSEEKLPN) has biased composition (basic and acidic residues). The interval 26–61 (LEKKSIPESEIQKSEEKLPNEEELTPTDPDEETNKE) is disordered. Residues 46–59 (EEELTPTDPDEETN) show a composition bias toward acidic residues. In terms of domain architecture, GH16 spans 70 to 328 (YDFTGNTPPP…WIHTYQLVEE (259 aa)). Substrate is bound by residues Trp-110, 119 to 129 (KAENSGVSDGK), 133 to 135 (KAT), Glu-188, Glu-193, and Arg-224. Glu-188 (nucleophile) is an active-site residue. Residue Glu-193 is the Proton donor of the active site.

It belongs to the glycosyl hydrolase 16 family.

It localises to the secreted. The enzyme catalyses Hydrolysis of (1-&gt;4)-beta-D-galactosidic linkages in agarose, giving the tetramer as the predominant product.. Functionally, cleaves the beta-1,4-linkages between beta-D-galactose and alpha-L-3,6-anhydro-galactose residues in agarose. Cleaves agarose in a random manner with retention of the anomeric-bond configuration, producing beta-anomers that give rise progressively to alpha-anomers when mutarotation takes place. The chain is Beta-agarase C (agaC) from Zobellia galactanivorans (strain DSM 12802 / CCUG 47099 / CIP 106680 / NCIMB 13871 / Dsij).